The sequence spans 407 residues: 1-deoxy-D-xylulose 5-phosphate reductoisomerase (407 aa).

Residues threonine 25, glycine 26, serine 27, isoleucine 28, asparagine 53, and asparagine 136 each contribute to the NADPH site. Lysine 137 serves as a coordination point for 1-deoxy-D-xylulose 5-phosphate. Glutamate 138 provides a ligand contact to NADPH. Aspartate 162 is a binding site for Mn(2+). 1-deoxy-D-xylulose 5-phosphate contacts are provided by serine 163, glutamate 164, serine 188, and histidine 211. A Mn(2+)-binding site is contributed by glutamate 164. Position 217 (glycine 217) interacts with NADPH. 1-deoxy-D-xylulose 5-phosphate-binding residues include serine 224, asparagine 229, lysine 230, and glutamate 233. Mn(2+) is bound at residue glutamate 233.

Belongs to the DXR family. It depends on Mg(2+) as a cofactor. Mn(2+) is required as a cofactor.

It catalyses the reaction 2-C-methyl-D-erythritol 4-phosphate + NADP(+) = 1-deoxy-D-xylulose 5-phosphate + NADPH + H(+). It participates in isoprenoid biosynthesis; isopentenyl diphosphate biosynthesis via DXP pathway; isopentenyl diphosphate from 1-deoxy-D-xylulose 5-phosphate: step 1/6. Its function is as follows. Catalyzes the NADPH-dependent rearrangement and reduction of 1-deoxy-D-xylulose-5-phosphate (DXP) to 2-C-methyl-D-erythritol 4-phosphate (MEP). The chain is 1-deoxy-D-xylulose 5-phosphate reductoisomerase from Afipia carboxidovorans (strain ATCC 49405 / DSM 1227 / KCTC 32145 / OM5) (Oligotropha carboxidovorans).